The chain runs to 314 residues: Methionyl-tRNA formyltransferase (314 aa).

Position 112–115 (112–115 (SLLP)) interacts with (6S)-5,6,7,8-tetrahydrofolate.

The protein belongs to the Fmt family.

It carries out the reaction L-methionyl-tRNA(fMet) + (6R)-10-formyltetrahydrofolate = N-formyl-L-methionyl-tRNA(fMet) + (6S)-5,6,7,8-tetrahydrofolate + H(+). In terms of biological role, attaches a formyl group to the free amino group of methionyl-tRNA(fMet). The formyl group appears to play a dual role in the initiator identity of N-formylmethionyl-tRNA by promoting its recognition by IF2 and preventing the misappropriation of this tRNA by the elongation apparatus. The sequence is that of Methionyl-tRNA formyltransferase from Legionella pneumophila subsp. pneumophila (strain Philadelphia 1 / ATCC 33152 / DSM 7513).